We begin with the raw amino-acid sequence, 700 residues long: Neoverrucotoxin subunit beta (700 aa).

In terms of domain architecture, B30.2/SPRY spans 506 to 700; the sequence is HMPGVETIKD…QKVNGQIKLL (195 aa).

It belongs to the SNTX/VTX toxin family. As to quaternary structure, heterodimer of alpha and beta subunits. In terms of processing, not glycosylated. Four intrachain disulfide linkages are present in the heterodimer. No interchain disulfide bound links the two subunits. In terms of tissue distribution, expressed by the venom gland.

The protein localises to the secreted. In terms of biological role, has hemolytic and lethal activities. Its hemolytic activity is inhibited by anionic lipids, especially potently by cardiolipin. This is Neoverrucotoxin subunit beta from Synanceia verrucosa (Reef stonefish).